The primary structure comprises 93 residues: Small ribosomal subunit protein uS19 (93 aa).

It belongs to the universal ribosomal protein uS19 family.

Protein S19 forms a complex with S13 that binds strongly to the 16S ribosomal RNA. The sequence is that of Small ribosomal subunit protein uS19 from Tropheryma whipplei (strain TW08/27) (Whipple's bacillus).